We begin with the raw amino-acid sequence, 316 residues long: tRNA dimethylallyltransferase (316 aa).

ATP is bound at residue 23 to 30; sequence GPTASGKS. 25–30 contacts substrate; it reads TASGKS. The tract at residues 48-51 is interaction with substrate tRNA; sequence DSMQ.

Belongs to the IPP transferase family. As to quaternary structure, monomer. Requires Mg(2+) as cofactor.

The enzyme catalyses adenosine(37) in tRNA + dimethylallyl diphosphate = N(6)-dimethylallyladenosine(37) in tRNA + diphosphate. Catalyzes the transfer of a dimethylallyl group onto the adenine at position 37 in tRNAs that read codons beginning with uridine, leading to the formation of N6-(dimethylallyl)adenosine (i(6)A). This Rhodopseudomonas palustris (strain BisB18) protein is tRNA dimethylallyltransferase.